Here is a 428-residue protein sequence, read N- to C-terminus: Glutamate-1-semialdehyde 2,1-aminomutase (428 aa).

K267 carries the N6-(pyridoxal phosphate)lysine modification.

The protein belongs to the class-III pyridoxal-phosphate-dependent aminotransferase family. HemL subfamily. In terms of assembly, homodimer. Pyridoxal 5'-phosphate is required as a cofactor.

The protein localises to the cytoplasm. It carries out the reaction (S)-4-amino-5-oxopentanoate = 5-aminolevulinate. Its pathway is porphyrin-containing compound metabolism; protoporphyrin-IX biosynthesis; 5-aminolevulinate from L-glutamyl-tRNA(Glu): step 2/2. It functions in the pathway porphyrin-containing compound metabolism; chlorophyll biosynthesis. The protein is Glutamate-1-semialdehyde 2,1-aminomutase of Prochlorococcus marinus (strain MIT 9313).